The chain runs to 387 residues: 1-deoxy-D-xylulose 5-phosphate reductoisomerase (387 aa).

The NADPH site is built by Thr10, Gly11, Ile13, Asn38, and Asn122. Residue Lys123 participates in 1-deoxy-D-xylulose 5-phosphate binding. NADPH is bound at residue Glu124. Asp148 provides a ligand contact to Mn(2+). 1-deoxy-D-xylulose 5-phosphate contacts are provided by Ser149, Glu150, Ser174, and His197. Glu150 lines the Mn(2+) pocket. Position 203 (Gly203) interacts with NADPH. 1-deoxy-D-xylulose 5-phosphate-binding residues include Ser210, Asn215, Lys216, and Glu219. Glu219 provides a ligand contact to Mn(2+).

It belongs to the DXR family. Mg(2+) serves as cofactor. The cofactor is Mn(2+).

It carries out the reaction 2-C-methyl-D-erythritol 4-phosphate + NADP(+) = 1-deoxy-D-xylulose 5-phosphate + NADPH + H(+). Its pathway is isoprenoid biosynthesis; isopentenyl diphosphate biosynthesis via DXP pathway; isopentenyl diphosphate from 1-deoxy-D-xylulose 5-phosphate: step 1/6. In terms of biological role, catalyzes the NADPH-dependent rearrangement and reduction of 1-deoxy-D-xylulose-5-phosphate (DXP) to 2-C-methyl-D-erythritol 4-phosphate (MEP). This Ehrlichia canis (strain Jake) protein is 1-deoxy-D-xylulose 5-phosphate reductoisomerase.